A 360-amino-acid chain; its full sequence is Phospho-N-acetylmuramoyl-pentapeptide-transferase (360 aa).

10 helical membrane-spanning segments follow: residues 27–47, 71–91, 93–113, 128–148, 168–188, 199–219, 239–259, 262–282, 288–308, and 337–357; these read GAMITSALIVFLFGPSIINSL, TPTMGGLMIMTGILVSCLLWA, LASVYVWVVLLVTVGFGAIGF, FSGKARLGIEFLIAAVAAFVI, FVVNLSWFFIPFAAFVMVGAG, GLAIVPVMVAAASFGFIAYLS, LAVVLGAVIGAGLGFLWFNAP, AIFMGDTGSLALGGMLGTVAV, IVLAIIGGLFVVEALSVIIQV, and QVVIRFWIVAIILAMIGLSTL.

The protein belongs to the glycosyltransferase 4 family. MraY subfamily. Requires Mg(2+) as cofactor.

The protein resides in the cell inner membrane. It catalyses the reaction UDP-N-acetyl-alpha-D-muramoyl-L-alanyl-gamma-D-glutamyl-meso-2,6-diaminopimeloyl-D-alanyl-D-alanine + di-trans,octa-cis-undecaprenyl phosphate = di-trans,octa-cis-undecaprenyl diphospho-N-acetyl-alpha-D-muramoyl-L-alanyl-D-glutamyl-meso-2,6-diaminopimeloyl-D-alanyl-D-alanine + UMP. It functions in the pathway cell wall biogenesis; peptidoglycan biosynthesis. In terms of biological role, catalyzes the initial step of the lipid cycle reactions in the biosynthesis of the cell wall peptidoglycan: transfers peptidoglycan precursor phospho-MurNAc-pentapeptide from UDP-MurNAc-pentapeptide onto the lipid carrier undecaprenyl phosphate, yielding undecaprenyl-pyrophosphoryl-MurNAc-pentapeptide, known as lipid I. The polypeptide is Phospho-N-acetylmuramoyl-pentapeptide-transferase (Brucella anthropi (strain ATCC 49188 / DSM 6882 / CCUG 24695 / JCM 21032 / LMG 3331 / NBRC 15819 / NCTC 12168 / Alc 37) (Ochrobactrum anthropi)).